A 372-amino-acid chain; its full sequence is Cytochrome b (372 aa).

Helical transmembrane passes span 25 to 45, 69 to 90, 105 to 125, and 170 to 190; these read FGSMLLTCSALQIMTGFFLAV, WMMQNLHAIGASMFFICIYIHM, WLSGTTLLIMLMATAFFGYVL, and FFALHFILPFGIISLSSLHIM. 2 residues coordinate heme b: histidine 75 and histidine 89. Heme b contacts are provided by histidine 174 and histidine 188. Histidine 193 lines the a ubiquinone pocket. 4 helical membrane passes run 218–238, 280–300, 312–332, and 339–358; these read YKDLFMISSMIMIMLLTISFL, LGGALALAMSIMILLTVPFTH, FMQLMFWTLMATFIIITWTAT, and YTTISQVASTLYFMFFMSNL.

The protein belongs to the cytochrome b family. As to quaternary structure, the cytochrome bc1 complex contains 3 respiratory subunits (MT-CYB, CYC1 and UQCRFS1), 2 core proteins (UQCRC1 and UQCRC2) and probably 6 low-molecular weight proteins. The cofactor is heme b.

Its subcellular location is the mitochondrion inner membrane. In terms of biological role, component of the ubiquinol-cytochrome c reductase complex (complex III or cytochrome b-c1 complex) that is part of the mitochondrial respiratory chain. The b-c1 complex mediates electron transfer from ubiquinol to cytochrome c. Contributes to the generation of a proton gradient across the mitochondrial membrane that is then used for ATP synthesis. This Sanzinia madagascariensis (Madagascar tree boa) protein is Cytochrome b (MT-CYB).